The sequence spans 31 residues: Cytolysin Oshem 2 (31 aa).

Its subcellular location is the secreted. The protein resides in the nematocyst. The protein localises to the target cell membrane. In terms of biological role, cytolysin that shows weak hemolysis and weak myonecrosis. This Olindias sambaquiensis (Hydromedusa) protein is Cytolysin Oshem 2.